The chain runs to 415 residues: Hepatocyte nuclear factor 3-beta (415 aa).

The segment at residues 150 to 244 (KPPYSYISLI…ENGCYLRRQK (95 aa)) is a DNA-binding region (fork-head). Residues 251–262 (KMSMKEPGRKGG) show a composition bias toward basic and acidic residues. The segment at 251–324 (KMSMKEPGRK…GQHLMSQHHS (74 aa)) is disordered. Residues 266 to 277 (SANSSSDSCNGN) are compositionally biased toward low complexity. Residues 310–323 (SPVSQGQHLMSQHH) show a composition bias toward polar residues.

The protein resides in the nucleus. Its function is as follows. Transcription activator for a number of liver genes. Interacts with the cis-acting regulatory regions of these genes. The sequence is that of Hepatocyte nuclear factor 3-beta (foxa2) from Oryzias latipes (Japanese rice fish).